The sequence spans 206 residues: Ribonuclease M5 (206 aa).

In terms of domain architecture, Toprim spans Asn8–Pro91. Mg(2+)-binding residues include Glu14, Asp60, and Asp62.

This sequence belongs to the ribonuclease M5 family. The cofactor is Mg(2+).

It localises to the cytoplasm. It carries out the reaction Endonucleolytic cleavage of RNA, removing 21 and 42 nucleotides, respectively, from the 5'- and 3'-termini of a 5S-rRNA precursor.. Required for correct processing of both the 5' and 3' ends of 5S rRNA precursor. Cleaves both sides of a double-stranded region yielding mature 5S rRNA in one step. The polypeptide is Ribonuclease M5 (Lactococcus lactis subsp. lactis (strain IL1403) (Streptococcus lactis)).